A 200-amino-acid chain; its full sequence is UPF0301 protein BruAb1_0502 (200 aa).

This sequence belongs to the UPF0301 (AlgH) family.

This chain is UPF0301 protein BruAb1_0502, found in Brucella abortus biovar 1 (strain 9-941).